The primary structure comprises 450 residues: ATP-dependent protease ATPase subunit HslU (450 aa).

Residues Val-29, 71 to 76 (GVGKTE), Asp-261, Glu-328, and Arg-400 contribute to the ATP site.

The protein belongs to the ClpX chaperone family. HslU subfamily. As to quaternary structure, a double ring-shaped homohexamer of HslV is capped on each side by a ring-shaped HslU homohexamer. The assembly of the HslU/HslV complex is dependent on binding of ATP.

The protein localises to the cytoplasm. Functionally, ATPase subunit of a proteasome-like degradation complex; this subunit has chaperone activity. The binding of ATP and its subsequent hydrolysis by HslU are essential for unfolding of protein substrates subsequently hydrolyzed by HslV. HslU recognizes the N-terminal part of its protein substrates and unfolds these before they are guided to HslV for hydrolysis. This Rickettsia africae (strain ESF-5) protein is ATP-dependent protease ATPase subunit HslU.